We begin with the raw amino-acid sequence, 1042 residues long: MGLKRAARQQRDIGKPAFDEEALVELTGKIDKTLPAVEQKIAGKRKRQNASDDGRGSKRRQTHPTEAEEHRDSHAAAKDKANRILLEEIIALGGDEKDLELVADVDSGNEGGGGPSQPKISSEQSLDQSFKDELAKFAASLGFHQFHNREDLNTEDEASPDEDAVGSTTDVSSDSDEGGGQEEMEKEDVDSFSDNEEKVTEKVDSGEAKIIPQDTKKGKQFRNLIIDPRPDWHAFPLDELPASRPDHPGKYSASIANLKSYAESLLEEDTANYQSAQAHSSTRKFMSTIMSSGTLSDKISALTLSIQESPLHNRKAFESLITLAGKKNRGQAIAALGALVDLLGNGAVLPDDRRLRPFGGQPALFGALQGSASQTWVAGQTLPGKLTKAHLVMWAYEDWLKAAYFRIIQLLEVWCSDEIEYSRSRALDFVFGLLKNKPEQEANLLRLLVNKLGDRERKIASRASYLLLQLLNVHPGMKGIVIGTVEQEVLLKPGQSLRTKYTAINTLNQTILSTREPSIADKLLRIYFDMFLALLKSGVLGNVGALNGDKRDGGTPRKKSNPSGSLTVGNEQDVAQKLVSALLTGVNRAIPFATTEDSTLEKHLDTLFRITHSSNFNTSIQALMLIQQLATSKQLAVDRFYRTLYESLLDPRLVTSSKHALYLNLIFRAMKNDADVRRVKAFVKRLIQILTLHQPSFTCGVLFLISELQKTFPDLRTLLDDPEEADDDGEEVYKDVCEDGTLDNVETQGVTSSFVSPATAYDGRKRDPEHSNAHRSCLWELTPLLSHYHPSVGIFARNLLSPQQSLPKPDLAHHTLMHFLDKFVYRNPKAEETKRGGSIMQPVLASGGTSRIVVSSKAAAKQQQSVNSASFWNLKPEQVLAEDVFFHEYFTRIGKPGKMTRKRDETKREFGSGDETGDEDEIWDALVKSKPDVEGPNVDDDSDADLGDFDYSDDEEDGSRTDGSMSDIGMDSDGFEGIFDDAGESDEQSSGEDEAPTKAKKGTATSGQKGRLSKKELKTLPTFASAEDYADILAAEDDGLDD.

6 disordered regions span residues 1 to 20 (MGLK…AFDE), 28 to 79 (GKID…AAKD), 101 to 128 (LVAD…SLDQ), 148 to 214 (NRED…IPQD), 546 to 567 (LNGD…GSLT), and 897 to 1020 (GKMT…LKTL). 2 stretches are compositionally biased toward basic and acidic residues: residues 9-18 (QQRDIGKPAF) and 63-79 (HPTE…AAKD). Residues 118 to 128 (PKISSEQSLDQ) are compositionally biased toward polar residues. Acidic residues-rich tracts occupy residues 153–164 (NTEDEASPDEDA) and 173–194 (SDSD…SFSD). The span at 195–207 (NEEKVTEKVDSGE) shows a compositional bias: basic and acidic residues. A compositionally biased stretch (basic and acidic residues) spans 902–911 (KRDETKREFG). The segment covering 937-957 (NVDDDSDADLGDFDYSDDEED) has biased composition (acidic residues). Low complexity predominate over residues 962 to 972 (DGSMSDIGMDS). Over residues 978–994 (IFDDAGESDEQSSGEDE) the composition is skewed to acidic residues.

It belongs to the CBF/MAK21 family. Interacts with NOC2. Forms a nucleolar complex with NOC2 that binds to 90S and 66S pre-ribosomes.

It is found in the nucleus. Its subcellular location is the nucleolus. Required for 60S ribosomal subunit synthesis. This chain is Ribosome biogenesis protein NOC1 (NOC1), found in Chaetomium thermophilum (strain DSM 1495 / CBS 144.50 / IMI 039719) (Thermochaetoides thermophila).